Here is a 746-residue protein sequence, read N- to C-terminus: Polyribonucleotide nucleotidyltransferase (746 aa).

Mg(2+) contacts are provided by aspartate 493 and aspartate 499. The 60-residue stretch at 560 to 619 (PRIITLQINPEKIGALIGPGGKTIRSITEATGAQIDIEEDGRVYISTADAAAAQQAVAMV) folds into the KH domain. The S1 motif domain maps to 629-698 (GDIFLGKVVR…GTGKVSLSRR (70 aa)). Residues 704 to 746 (ETAEDRRAAGAGRGLRDGGRSSGSERSGDRSPRSDDRPRPRRR) are disordered. 2 stretches are compositionally biased toward basic and acidic residues: residues 706–722 (AEDR…RDGG) and 729–746 (RSGD…PRRR).

Belongs to the polyribonucleotide nucleotidyltransferase family. The cofactor is Mg(2+).

The protein localises to the cytoplasm. It catalyses the reaction RNA(n+1) + phosphate = RNA(n) + a ribonucleoside 5'-diphosphate. Functionally, involved in mRNA degradation. Catalyzes the phosphorolysis of single-stranded polyribonucleotides processively in the 3'- to 5'-direction. In Roseiflexus castenholzii (strain DSM 13941 / HLO8), this protein is Polyribonucleotide nucleotidyltransferase.